The primary structure comprises 347 residues: Dihydroorotase (347 aa).

Zn(2+) is bound by residues His17 and His19. Substrate contacts are provided by residues 19-21 and Asn45; that span reads HLR. Zn(2+) contacts are provided by Lys103, His140, and His178. Lys103 is modified (N6-carboxylysine). His140 is a binding site for substrate. Leu223 is a binding site for substrate. Zn(2+) is bound at residue Asp251. Asp251 is an active-site residue. Residues His255 and Ala267 each coordinate substrate.

This sequence belongs to the metallo-dependent hydrolases superfamily. DHOase family. Class II DHOase subfamily. In terms of assembly, homodimer. Requires Zn(2+) as cofactor.

It catalyses the reaction (S)-dihydroorotate + H2O = N-carbamoyl-L-aspartate + H(+). Its pathway is pyrimidine metabolism; UMP biosynthesis via de novo pathway; (S)-dihydroorotate from bicarbonate: step 3/3. Functionally, catalyzes the reversible cyclization of carbamoyl aspartate to dihydroorotate. The chain is Dihydroorotase from Pectobacterium atrosepticum (strain SCRI 1043 / ATCC BAA-672) (Erwinia carotovora subsp. atroseptica).